The following is a 539-amino-acid chain: Kynureninase 2 (539 aa).

The tract at residues 60–87 (DGGVAGETKEPRVPNGVSSATKPNGTVN) is disordered. The segment covering 75 to 87 (GVSSATKPNGTVN) has biased composition (polar residues). Pyridoxal 5'-phosphate contacts are provided by residues Leu171, Thr172, 199 to 202 (FPSD), Asp290, His293, and Tyr315. Residue Lys316 is modified to N6-(pyridoxal phosphate)lysine. Residues 340 to 352 (GGGGSGGVGGGRG) show a composition bias toward gly residues. The interval 340–363 (GGGGSGGVGGGRGEGGDGDGGDGG) is disordered. Pyridoxal 5'-phosphate is bound by residues Trp379 and Asn407.

Belongs to the kynureninase family. Homodimer. The cofactor is pyridoxal 5'-phosphate.

It localises to the cytoplasm. The enzyme catalyses L-kynurenine + H2O = anthranilate + L-alanine + H(+). The catalysed reaction is 3-hydroxy-L-kynurenine + H2O = 3-hydroxyanthranilate + L-alanine + H(+). It functions in the pathway amino-acid degradation; L-kynurenine degradation; L-alanine and anthranilate from L-kynurenine: step 1/1. The protein operates within cofactor biosynthesis; NAD(+) biosynthesis; quinolinate from L-kynurenine: step 2/3. Its function is as follows. Catalyzes the cleavage of L-kynurenine (L-Kyn) and L-3-hydroxykynurenine (L-3OHKyn) into anthranilic acid (AA) and 3-hydroxyanthranilic acid (3-OHAA), respectively. This chain is Kynureninase 2, found in Chaetomium globosum (strain ATCC 6205 / CBS 148.51 / DSM 1962 / NBRC 6347 / NRRL 1970) (Soil fungus).